We begin with the raw amino-acid sequence, 210 residues long: Protein GET1 (210 aa).

At Met1 to Leu4 the chain is on the lumenal side. Residues Leu5 to Thr24 form a helical membrane-spanning segment. The Cytoplasmic portion of the chain corresponds to Thr25–Arg110. Positions Arg43–Lys97 form a coiled coil. Residues Phe111 to Phe131 form a helical membrane-spanning segment. The Lumenal segment spans residues Glu132 to Thr155. Residues Val156–Ala172 form a helical membrane-spanning segment. The Cytoplasmic portion of the chain corresponds to Gly173–Leu210.

The protein belongs to the WRB/GET1 family. In terms of assembly, interacts with GET3.

The protein resides in the endoplasmic reticulum membrane. In terms of biological role, required for the post-translational delivery of tail-anchored (TA) proteins to the endoplasmic reticulum. Acts as a membrane receptor for soluble GET3, which recognizes and selectively binds the transmembrane domain of TA proteins in the cytosol. This chain is Protein GET1, found in Uncinocarpus reesii (strain UAMH 1704).